The chain runs to 545 residues: Cytosolic Fe-S cluster assembly factor NAR1 (545 aa).

6 residues coordinate [4Fe-4S] cluster: Cys20, Cys72, Cys75, Cys78, Cys186, and Cys241. The tract at residues 401-438 is disordered; the sequence is PSTKQTSTVKANPLASRRRARLASKTDGTASSNNATQD. Residues 426–438 show a composition bias toward polar residues; it reads TDGTASSNNATQD. Residues Cys453 and Cys457 each coordinate [4Fe-4S] cluster.

This sequence belongs to the NARF family.

Functionally, component of the cytosolic Fe/S protein assembly machinery. Required for maturation of extramitochondrial Fe/S proteins. May play a role in the transfer of pre-assembled Fe/S clusters to target apoproteins. The sequence is that of Cytosolic Fe-S cluster assembly factor NAR1 (NAR1) from Debaryomyces hansenii (strain ATCC 36239 / CBS 767 / BCRC 21394 / JCM 1990 / NBRC 0083 / IGC 2968) (Yeast).